We begin with the raw amino-acid sequence, 462 residues long: Glutamate decarboxylase alpha (462 aa).

Residue lysine 273 is modified to N6-(pyridoxal phosphate)lysine.

This sequence belongs to the group II decarboxylase family. Pyridoxal 5'-phosphate serves as cofactor.

The enzyme catalyses L-glutamate + H(+) = 4-aminobutanoate + CO2. In terms of biological role, converts internalized glutamate to GABA and increases the internal pH. Involved in glutamate-dependent acid resistance in gastric fluid. In Listeria monocytogenes serovar 1/2a (strain ATCC BAA-679 / EGD-e), this protein is Glutamate decarboxylase alpha (gadA).